A 93-amino-acid chain; its full sequence is Integration host factor subunit beta (93 aa).

Residues 59 to 93 are disordered; sequence RVGRNPKTGQSVSLDGKFVPHFKPGKELRDRVNDD. Positions 82 to 93 are enriched in basic and acidic residues; sequence PGKELRDRVNDD.

Belongs to the bacterial histone-like protein family. In terms of assembly, heterodimer of an alpha and a beta chain.

Its function is as follows. This protein is one of the two subunits of integration host factor, a specific DNA-binding protein that functions in genetic recombination as well as in transcriptional and translational control. The sequence is that of Integration host factor subunit beta from Stutzerimonas stutzeri (strain A1501) (Pseudomonas stutzeri).